Here is a 175-residue protein sequence, read N- to C-terminus: Protein MAL2 (175 aa).

Over 1–33 (MSAGGAVPPPPNPAVSFPAPRVTLPAGPDILRT) the chain is Cytoplasmic. Residues 30-174 (ILRTYSGAFV…SLGLALRRWR (145 aa)) enclose the MARVEL domain. The chain crosses the membrane as a helical span at residues 34-54 (YSGAFVCLEIVLGGLVWILVA). The Lumenal portion of the chain corresponds to 55–65 (SSNVPLPLLQG). The helical transmembrane segment at 66–86 (WVMFVSVTAFFFSLLFLGLFL) threads the bilayer. Over 87 to 101 (SGMVTQIDANWNFLD) the chain is Cytoplasmic. The chain crosses the membrane as a helical span at residues 102–122 (FVYHFIVFVFYFGAFLLEAAA). Topologically, residues 123–148 (TSLHDLQCNTTMTVKPLLNDNQYNIN) are lumenal. N131 is a glycosylation site (N-linked (GlcNAc...) asparagine). The helical transmembrane segment at 149 to 169 (VAATVFAFMTTACYGCSLGLA) threads the bilayer. Over 170–175 (LRRWRP) the chain is Cytoplasmic.

Belongs to the MAL family. Interacts with TPD52L2.

It is found in the cell membrane. It localises to the apical cell membrane. In terms of biological role, member of the machinery of polarized transport. Required for the indirect transcytotic route at the step of the egress of the transcytosing cargo from perinuclear endosomes in order for it to travel to the apical surface via a raft-dependent pathway. The sequence is that of Protein MAL2 (Mal2) from Mus musculus (Mouse).